The following is a 172-amino-acid chain: Large ribosomal subunit protein uL10 (172 aa).

It belongs to the universal ribosomal protein uL10 family. As to quaternary structure, part of the ribosomal stalk of the 50S ribosomal subunit. The N-terminus interacts with L11 and the large rRNA to form the base of the stalk. The C-terminus forms an elongated spine to which L12 dimers bind in a sequential fashion forming a multimeric L10(L12)X complex.

In terms of biological role, forms part of the ribosomal stalk, playing a central role in the interaction of the ribosome with GTP-bound translation factors. This is Large ribosomal subunit protein uL10 from Dinoroseobacter shibae (strain DSM 16493 / NCIMB 14021 / DFL 12).